The sequence spans 883 residues: MDSGVKLEHMNCFQLSYQYSWTTRKKRTLKPFMSKGSSPSSSSDSRKRKLSRAEDSDDSAVKRNAKRRRKICKVEEYYEDDDCILSDWVQRNTAKRIDKRNEEVEVMVKIESGDDCTIGKWFSDVSSKRKDKRQVEVDEDEEWEEEVTLCSKIKATSSRSRTHSLSANSPENVTDVISPCRSRSPASNVSDSIQKNDCTSSRKQSGPICHQCLKGERITLLICSECEKTMFCLQCIRKWYPNLSEDDVVEKCPLCRQNCNCSKCLHLNGLIETSKRELAKSERRHHLQYLITLMLPFLNKLSIFQKLEIEFEATVQGKLPSEVEITAAISYTDERVYCDHCATSIVDLHRSCPKCSYELCLKCCQEIREGSLSERPEMKFHYVDRGHRYMHGLDAAEPSLSSTFEDEEANPSDAKWSLGENGSITCAPEKLGGCGERMLELRRILPLTWMSDLEHKAETFLSSYNISPRMLNCRCSSLETELTRKSASRTTSSDNYLFCPESLGVLKEEELLHFQEHWAKGEPVIVRNALDNTPGLSWEPMVMWRALCENVNSTSSSEMSQVKAIDCLANCEVEINTRQFFEGYSKGRTYENFWPEMLKLKDWPPSDKFEDLLPRHCDEFISALPFQEYSDPRTGILNIATKLPEGFIKPDLGPKTYIAYGIPDELGRGDSVTKLHCDMSDAVNILTHTAEVTLSQEQISSVKALKQKHKLQNKVDKQSTEDCNEKEEEEEEELNMPEISSNENEETGSALWDIFRREDVPKLEEYLRKHCKEFRHTYCSPVTKVYHPIHDQSCYLTLEHKRKLKAEYGIEPWTFVQKLGEAVFIPAGCPHQVRNLKSCTKVAVDFVSPENIHECLRLTEEFRQLPKNHKAREDKLEASLLSL.

2 disordered regions span residues 30-62 (KPFMSKGSSPSSSSDSRKRKLSRAEDSDDSAVK) and 161-204 (RTHS…SRKQ). The span at 34 to 43 (SKGSSPSSSS) shows a compositional bias: low complexity. Polar residues-rich tracts occupy residues 161 to 172 (RTHSLSANSPEN) and 184 to 204 (SPASNVSDSIQKNDCTSSRKQ). Zn(2+) is bound by residues Cys-209, Cys-212, Cys-223, Cys-226, Cys-232, Cys-235, Cys-252, Cys-255, Cys-338, Cys-341, Cys-363, and His-381. The RING-type; degenerate zinc-finger motif lies at 209-256 (CHQCLKGERITLLICSECEKTMFCLQCIRKWYPNLSEDDVVEKCPLCR). A B box-type; atypical zinc finger spans residues 333 to 392 (DERVYCDHCATSIVDLHRSCPKCSYELCLKCCQEIREGSLSERPEMKFHYVDRGHRYMHG). A JmjC domain is found at 632–863 (PRTGILNIAT…ECLRLTEEFR (232 aa)). Fe cation contacts are provided by His-676 and Asp-678. Residues 713–743 (NKVDKQSTEDCNEKEEEEEEELNMPEISSNE) form a disordered region. A compositionally biased stretch (acidic residues) spans 722–735 (DCNEKEEEEEEELN). A Nuclear localization signal motif is present at residues 755 to 762 (FRREDVPK). His-831 contributes to the Fe cation binding site.

The protein belongs to the JARID1 histone demethylase family. Fe(2+) is required as a cofactor. As to expression, expressed in inflorescences, roots, siliques, leaves and stems.

Its subcellular location is the nucleus. Functionally, may function as histone H3 lysine demethylase and be involved in regulation of gene expression. The sequence is that of Lysine-specific demethylase JMJ29 from Arabidopsis thaliana (Mouse-ear cress).